The sequence spans 400 residues: Formate-dependent phosphoribosylglycinamide formyltransferase (400 aa).

Residues 21–22 (EL) and Glu-81 contribute to the N(1)-(5-phospho-beta-D-ribosyl)glycinamide site. Residues Arg-114, Lys-155, 160 to 165 (SSGKGQ), 195 to 198 (EGRI), and Glu-203 contribute to the ATP site. In terms of domain architecture, ATP-grasp spans 119–313 (RLAAEKLGLP…EFELHVRAIL (195 aa)). Mg(2+) is bound by residues Glu-272 and Glu-284. Residues Asp-291, Lys-360, and 367-368 (RR) each bind N(1)-(5-phospho-beta-D-ribosyl)glycinamide.

This sequence belongs to the PurK/PurT family. In terms of assembly, homodimer.

The catalysed reaction is N(1)-(5-phospho-beta-D-ribosyl)glycinamide + formate + ATP = N(2)-formyl-N(1)-(5-phospho-beta-D-ribosyl)glycinamide + ADP + phosphate + H(+). It participates in purine metabolism; IMP biosynthesis via de novo pathway; N(2)-formyl-N(1)-(5-phospho-D-ribosyl)glycinamide from N(1)-(5-phospho-D-ribosyl)glycinamide (formate route): step 1/1. Involved in the de novo purine biosynthesis. Catalyzes the transfer of formate to 5-phospho-ribosyl-glycinamide (GAR), producing 5-phospho-ribosyl-N-formylglycinamide (FGAR). Formate is provided by PurU via hydrolysis of 10-formyl-tetrahydrofolate. The protein is Formate-dependent phosphoribosylglycinamide formyltransferase of Methylococcus capsulatus (strain ATCC 33009 / NCIMB 11132 / Bath).